A 303-amino-acid polypeptide reads, in one-letter code: Sulfate adenylyltransferase subunit 2 (303 aa).

This sequence belongs to the PAPS reductase family. CysD subfamily. In terms of assembly, heterodimer composed of CysD, the smaller subunit, and CysN.

It carries out the reaction sulfate + ATP + H(+) = adenosine 5'-phosphosulfate + diphosphate. It functions in the pathway sulfur metabolism; hydrogen sulfide biosynthesis; sulfite from sulfate: step 1/3. With CysN forms the ATP sulfurylase (ATPS) that catalyzes the adenylation of sulfate producing adenosine 5'-phosphosulfate (APS) and diphosphate, the first enzymatic step in sulfur assimilation pathway. APS synthesis involves the formation of a high-energy phosphoric-sulfuric acid anhydride bond driven by GTP hydrolysis by CysN coupled to ATP hydrolysis by CysD. This chain is Sulfate adenylyltransferase subunit 2, found in Sulfurovum sp. (strain NBC37-1).